The following is a 92-amino-acid chain: UPF0473 protein BC_4380 (92 aa).

This sequence belongs to the UPF0473 family.

This Bacillus cereus (strain ATCC 14579 / DSM 31 / CCUG 7414 / JCM 2152 / NBRC 15305 / NCIMB 9373 / NCTC 2599 / NRRL B-3711) protein is UPF0473 protein BC_4380.